A 237-amino-acid chain; its full sequence is Opacity protein opA57 (237 aa).

A1 is a signal peptide.

It belongs to the opacity porin family.

The protein localises to the cell outer membrane. In terms of biological role, implicated in a number of adherence functions. OPA proteins are implicated in pathogenesis and are subject to phase variation. This chain is Opacity protein opA57 (opaK), found in Neisseria gonorrhoeae.